The chain runs to 365 residues: tRNA 2-selenouridine synthase (365 aa).

The Rhodanese domain maps to 12 to 136; it reads FLHDVPLLDV…LRMFLIDTTQ (125 aa). Cys-95 functions as the S-selanylcysteine intermediate in the catalytic mechanism.

This sequence belongs to the SelU family. Monomer.

The catalysed reaction is 5-methylaminomethyl-2-thiouridine(34) in tRNA + selenophosphate + (2E)-geranyl diphosphate + H2O + H(+) = 5-methylaminomethyl-2-selenouridine(34) in tRNA + (2E)-thiogeraniol + phosphate + diphosphate. It catalyses the reaction 5-methylaminomethyl-2-thiouridine(34) in tRNA + (2E)-geranyl diphosphate = 5-methylaminomethyl-S-(2E)-geranyl-thiouridine(34) in tRNA + diphosphate. It carries out the reaction 5-methylaminomethyl-S-(2E)-geranyl-thiouridine(34) in tRNA + selenophosphate + H(+) = 5-methylaminomethyl-2-(Se-phospho)selenouridine(34) in tRNA + (2E)-thiogeraniol. The enzyme catalyses 5-methylaminomethyl-2-(Se-phospho)selenouridine(34) in tRNA + H2O = 5-methylaminomethyl-2-selenouridine(34) in tRNA + phosphate. Involved in the post-transcriptional modification of the uridine at the wobble position (U34) of tRNA(Lys), tRNA(Glu) and tRNA(Gln). Catalyzes the conversion of 2-thiouridine (S2U-RNA) to 2-selenouridine (Se2U-RNA). Acts in a two-step process involving geranylation of 2-thiouridine (S2U) to S-geranyl-2-thiouridine (geS2U) and subsequent selenation of the latter derivative to 2-selenouridine (Se2U) in the tRNA chain. The polypeptide is tRNA 2-selenouridine synthase (Verminephrobacter eiseniae (strain EF01-2)).